The chain runs to 226 residues: ATP synthase subunit a (226 aa).

7 helical membrane passes run 18–38, 44–64, 79–99, 105–125, 137–157, 177–197, and 202–222; these read FIIG…ARYA, VVPS…ISFA, LAAT…IPGF, SWSF…FEGI, FMGP…ISHF, FLLV…FAIL, and LLQA…AVVV.

It belongs to the ATPase A chain family. F-type ATPases have 2 components, CF(1) - the catalytic core - and CF(0) - the membrane proton channel. CF(1) has five subunits: alpha(3), beta(3), gamma(1), delta(1), epsilon(1). CF(0) has three main subunits: a(1), b(2) and c(9-12). The alpha and beta chains form an alternating ring which encloses part of the gamma chain. CF(1) is attached to CF(0) by a central stalk formed by the gamma and epsilon chains, while a peripheral stalk is formed by the delta and b chains.

It is found in the cell inner membrane. Its function is as follows. Key component of the proton channel; it plays a direct role in the translocation of protons across the membrane. The protein is ATP synthase subunit a of Helicobacter hepaticus (strain ATCC 51449 / 3B1).